A 466-amino-acid polypeptide reads, in one-letter code: Cytochrome P450 85A1 (466 aa).

A helical transmembrane segment spans residues 1-21; sequence MVLAVLIGVLVGIVLVSSLLL. A heme-binding site is contributed by Cys-416.

This sequence belongs to the cytochrome P450 family. The cofactor is heme.

The protein resides in the membrane. It catalyses the reaction 6-deoxoteasterone + reduced [NADPH--hemoprotein reductase] + O2 = 6alpha-hydroxyteasterone + oxidized [NADPH--hemoprotein reductase] + H2O + H(+). The catalysed reaction is 6alpha-hydroxytyphasterol + reduced [NADPH--hemoprotein reductase] + O2 = teasterone + oxidized [NADPH--hemoprotein reductase] + 2 H2O + H(+). The enzyme catalyses 3-dehydro-6-deoxoteasterone + reduced [NADPH--hemoprotein reductase] + O2 = 3-dehydro-6alpha-hydroxyteasterone + oxidized [NADPH--hemoprotein reductase] + H2O + H(+). It carries out the reaction 3-dehydro-6alpha-hydroxyteasterone + reduced [NADPH--hemoprotein reductase] + O2 = 3-dehydroteasterone + oxidized [NADPH--hemoprotein reductase] + 2 H2O + H(+). It catalyses the reaction 6-deoxotyphasterol + reduced [NADPH--hemoprotein reductase] + O2 = 6alpha-hydroxytyphasterol + oxidized [NADPH--hemoprotein reductase] + H2O + H(+). The catalysed reaction is 6alpha-hydroxytyphasterol + reduced [NADPH--hemoprotein reductase] + O2 = typhasterol + oxidized [NADPH--hemoprotein reductase] + 2 H2O + H(+). The enzyme catalyses 6-deoxocastasterone + reduced [NADPH--hemoprotein reductase] + O2 = 6alpha-hydroxycastasterone + oxidized [NADPH--hemoprotein reductase] + H2O + H(+). It carries out the reaction 6alpha-hydroxycastasterone + reduced [NADPH--hemoprotein reductase] + O2 = castasterone + oxidized [NADPH--hemoprotein reductase] + 2 H2O + H(+). It catalyses the reaction 3-dehydro-6-deoxoteasterone + 2 reduced [NADPH--hemoprotein reductase] + 2 O2 = 3-dehydroteasterone + 2 oxidized [NADPH--hemoprotein reductase] + 3 H2O + 2 H(+). The catalysed reaction is 6-deoxocastasterone + 2 reduced [NADPH--hemoprotein reductase] + 2 O2 = castasterone + 2 oxidized [NADPH--hemoprotein reductase] + 3 H2O + 2 H(+). The enzyme catalyses 6-deoxoteasterone + 2 reduced [NADPH--hemoprotein reductase] + 2 O2 = teasterone + 2 oxidized [NADPH--hemoprotein reductase] + 3 H2O + 2 H(+). It carries out the reaction 6-deoxotyphasterol + 2 reduced [NADPH--hemoprotein reductase] + 2 O2 = typhasterol + 2 oxidized [NADPH--hemoprotein reductase] + 3 H2O + 2 H(+). It functions in the pathway plant hormone biosynthesis; brassinosteroid biosynthesis. Its function is as follows. Involved in reduction steps of the biosynthesis of plant campesterol-derivative steroids, ending to castasterone (CS) but missing brassinolide (BL). Catalyzes the C6-oxidation step in brassinosteroids biosynthesis; the conversion of 6-deoxoteasterone (6-deoxoTE) to teasterone (TE), 3-dehydro-6-deoxoteasterone (6-deoxo3DT, 6-deoxo-3-DHT) to 3-dehydroteasterone (3DT, 3-DHT), 6-deoxotyphasterol (6-deoxoTY) to typhasterol (TY) and of 6-deoxocastasterone (6-deoxoCS) to castasterone (CS). In Brachypodium distachyon (Purple false brome), this protein is Cytochrome P450 85A1.